We begin with the raw amino-acid sequence, 369 residues long: UDP-N-acetyl-3-dehydro-alpha-D-glucosamine 3-aminotranferase (369 aa).

Residue K190 is modified to N6-(pyridoxal phosphate)lysine.

Belongs to the DegT/DnrJ/EryC1 family. It depends on pyridoxal 5'-phosphate as a cofactor.

The catalysed reaction is UDP-2-acetamido-3-amino-2,3-dideoxy-alpha-D-glucopyranose + 2-oxoglutarate = UDP-2-acetamido-3-dehydro-2-deoxy-alpha-D-glucopyranose + L-glutamate. It functions in the pathway bacterial outer membrane biogenesis; LPS lipid A biosynthesis. Functionally, aminotranferase involved in the synthesis of 2,3-diamino-2,3-dideoxy-D-glucopyranose (GlcN3N), which is a component of lipid A in some species. Catalyzes the amination of UDP-2-acetamido-3-dehydro-2-deoxy-alpha-D-glucopyranose (UDP-3-oxo-GlcNAc) to UDP-2-acetamido-3-amino-2,3-dideoxy-alpha-D-glucopyranose (UDP-GlcNAc3N), using L-glutamate as the amine donor. Other amine donors, such as alanine and glutamine, can substitute for glutamate, but product formation is slower. This chain is UDP-N-acetyl-3-dehydro-alpha-D-glucosamine 3-aminotranferase, found in Acidithiobacillus ferrooxidans (strain ATCC 23270 / DSM 14882 / CIP 104768 / NCIMB 8455) (Ferrobacillus ferrooxidans (strain ATCC 23270)).